A 447-amino-acid chain; its full sequence is Na(+)-translocating NADH-quinone reductase subunit A (447 aa).

It belongs to the NqrA family. As to quaternary structure, composed of six subunits; NqrA, NqrB, NqrC, NqrD, NqrE and NqrF.

The catalysed reaction is a ubiquinone + n Na(+)(in) + NADH + H(+) = a ubiquinol + n Na(+)(out) + NAD(+). Functionally, NQR complex catalyzes the reduction of ubiquinone-1 to ubiquinol by two successive reactions, coupled with the transport of Na(+) ions from the cytoplasm to the periplasm. NqrA to NqrE are probably involved in the second step, the conversion of ubisemiquinone to ubiquinol. This chain is Na(+)-translocating NADH-quinone reductase subunit A, found in Saccharophagus degradans (strain 2-40 / ATCC 43961 / DSM 17024).